The sequence spans 475 residues: Probable phenylalanine--tRNA ligase alpha subunit (475 aa).

Positions 2-151 (TAVAQKIIEN…KRKLVSRRKK (150 aa)) are contains the major tRNA-Phe binding sites. L-phenylalanine is bound by residues threonine 309, 351-353 (QVE), and tyrosine 391. Residue glutamate 393 coordinates Mg(2+). An L-phenylalanine-binding site is contributed by phenylalanine 417.

It belongs to the class-II aminoacyl-tRNA synthetase family. Phe-tRNA synthetase alpha subunit type 2 subfamily. Tetramer of two alpha and two beta subunits. It depends on Mg(2+) as a cofactor.

The protein localises to the cytoplasm. It carries out the reaction tRNA(Phe) + L-phenylalanine + ATP = L-phenylalanyl-tRNA(Phe) + AMP + diphosphate + H(+). This Encephalitozoon cuniculi (strain GB-M1) (Microsporidian parasite) protein is Probable phenylalanine--tRNA ligase alpha subunit.